The chain runs to 282 residues: MPGMKEIKSRIKSVQSTRQITNAMEIVSTTKFKRYSKLVTESRPYEESMRKILGNIASGVKNEGHPLFDGRKEVKSIAIIVITSDRGLCGSFNSSTLKELEKLVEKNKNKNITIIPFGRKAIDFITKRNYEFSESFSKISPDEMNKIAGEISEEVVEKYNNHIYDEVYVIYNKFISALRYDLTCERIIPITRPEVELNSEYIFEPSTEYILSALLPRFINLQIYQAILNNTASEHSARKNSMSSATDNADEMIKTLNIKYNRNRQSAITQEITEIVGGASAL.

The protein belongs to the ATPase gamma chain family. F-type ATPases have 2 components, CF(1) - the catalytic core - and CF(0) - the membrane proton channel. CF(1) has five subunits: alpha(3), beta(3), gamma(1), delta(1), epsilon(1). CF(0) has three main subunits: a, b and c.

Its subcellular location is the cell inner membrane. Its function is as follows. Produces ATP from ADP in the presence of a proton gradient across the membrane. The gamma chain is believed to be important in regulating ATPase activity and the flow of protons through the CF(0) complex. In Fusobacterium nucleatum subsp. nucleatum (strain ATCC 25586 / DSM 15643 / BCRC 10681 / CIP 101130 / JCM 8532 / KCTC 2640 / LMG 13131 / VPI 4355), this protein is ATP synthase gamma chain.